Consider the following 237-residue polypeptide: Methylthioribulose-1-phosphate dehydratase (237 aa).

Cysteine 97 contacts substrate. Zn(2+)-binding residues include histidine 114 and histidine 116. The Proton donor/acceptor role is filled by glutamate 143. Histidine 199 contributes to the Zn(2+) binding site.

This sequence belongs to the aldolase class II family. MtnB subfamily. Zn(2+) serves as cofactor.

The protein localises to the cytoplasm. The catalysed reaction is 5-(methylsulfanyl)-D-ribulose 1-phosphate = 5-methylsulfanyl-2,3-dioxopentyl phosphate + H2O. It participates in amino-acid biosynthesis; L-methionine biosynthesis via salvage pathway; L-methionine from S-methyl-5-thio-alpha-D-ribose 1-phosphate: step 2/6. Catalyzes the dehydration of methylthioribulose-1-phosphate (MTRu-1-P) into 2,3-diketo-5-methylthiopentyl-1-phosphate (DK-MTP-1-P). The sequence is that of Methylthioribulose-1-phosphate dehydratase from Coccidioides posadasii (strain C735) (Valley fever fungus).